The sequence spans 581 residues: Proline--tRNA ligase (581 aa).

It belongs to the class-II aminoacyl-tRNA synthetase family. ProS type 1 subfamily. As to quaternary structure, homodimer.

The protein localises to the cytoplasm. It catalyses the reaction tRNA(Pro) + L-proline + ATP = L-prolyl-tRNA(Pro) + AMP + diphosphate. Functionally, catalyzes the attachment of proline to tRNA(Pro) in a two-step reaction: proline is first activated by ATP to form Pro-AMP and then transferred to the acceptor end of tRNA(Pro). As ProRS can inadvertently accommodate and process non-cognate amino acids such as alanine and cysteine, to avoid such errors it has two additional distinct editing activities against alanine. One activity is designated as 'pretransfer' editing and involves the tRNA(Pro)-independent hydrolysis of activated Ala-AMP. The other activity is designated 'posttransfer' editing and involves deacylation of mischarged Ala-tRNA(Pro). The misacylated Cys-tRNA(Pro) is not edited by ProRS. This Azoarcus sp. (strain BH72) protein is Proline--tRNA ligase.